The primary structure comprises 65 residues: Large ribosomal subunit protein bL33c (65 aa).

Belongs to the bacterial ribosomal protein bL33 family.

It localises to the plastid. Its subcellular location is the chloroplast. In Marchantia polymorpha (Common liverwort), this protein is Large ribosomal subunit protein bL33c (rpl33).